The following is a 270-amino-acid chain: MPELPEVETTRRGIAPHLEGQRVSRVVVRDRRLRWPIPEDLDVRLSGQRIVSVERRAKYLLINAEVGTLISHLGMSGNLRLVELGLPAAKHEHVDIELESGLMLRYTDPRRFGAMLWSLDPLNHELLLRLGPEPLTDLFDGERLFQLSRGRSMAVKPFIMDNAVVVGVGNIYATEALFAAGIDPRREAGGISRARYLKLAIEIKRVLAAAIEQGGTTLRDFIGGDGQPGYFQQELFVYGRGGQPCKVCGTELREVKLGQRASVYCPRCQR.

The active-site Schiff-base intermediate with DNA is proline 2. Catalysis depends on glutamate 3, which acts as the Proton donor. Lysine 58 acts as the Proton donor; for beta-elimination activity in catalysis. The DNA site is built by histidine 91, arginine 110, and arginine 151. The FPG-type zinc-finger motif lies at 236 to 270; it reads FVYGRGGQPCKVCGTELREVKLGQRASVYCPRCQR. The Proton donor; for delta-elimination activity role is filled by arginine 260.

The protein belongs to the FPG family. Monomer. Requires Zn(2+) as cofactor.

It carries out the reaction Hydrolysis of DNA containing ring-opened 7-methylguanine residues, releasing 2,6-diamino-4-hydroxy-5-(N-methyl)formamidopyrimidine.. The catalysed reaction is 2'-deoxyribonucleotide-(2'-deoxyribose 5'-phosphate)-2'-deoxyribonucleotide-DNA = a 3'-end 2'-deoxyribonucleotide-(2,3-dehydro-2,3-deoxyribose 5'-phosphate)-DNA + a 5'-end 5'-phospho-2'-deoxyribonucleoside-DNA + H(+). In terms of biological role, involved in base excision repair of DNA damaged by oxidation or by mutagenic agents. Acts as a DNA glycosylase that recognizes and removes damaged bases. Has a preference for oxidized purines, such as 7,8-dihydro-8-oxoguanine (8-oxoG). Has AP (apurinic/apyrimidinic) lyase activity and introduces nicks in the DNA strand. Cleaves the DNA backbone by beta-delta elimination to generate a single-strand break at the site of the removed base with both 3'- and 5'-phosphates. The polypeptide is Formamidopyrimidine-DNA glycosylase (Pseudomonas putida (strain ATCC 700007 / DSM 6899 / JCM 31910 / BCRC 17059 / LMG 24140 / F1)).